The chain runs to 585 residues: Urease subunit alpha (585 aa).

A Urease domain is found at 132-585; that stretch reads GGIDTHIHFI…LPMAQRYFLF (454 aa). His-137, His-139, and Lys-220 together coordinate Ni(2+). Lys-220 carries the N6-carboxylysine modification. His-222 contacts substrate. Ni(2+) contacts are provided by His-249 and His-275. The Proton donor role is filled by His-323. Residue Asp-363 coordinates Ni(2+).

It belongs to the metallo-dependent hydrolases superfamily. Urease alpha subunit family. Heterotrimer of UreA (gamma), UreB (beta) and UreC (alpha) subunits. Three heterotrimers associate to form the active enzyme. The cofactor is Ni cation. In terms of processing, carboxylation allows a single lysine to coordinate two nickel ions.

Its subcellular location is the cytoplasm. The catalysed reaction is urea + 2 H2O + H(+) = hydrogencarbonate + 2 NH4(+). It functions in the pathway nitrogen metabolism; urea degradation; CO(2) and NH(3) from urea (urease route): step 1/1. In Pseudarthrobacter chlorophenolicus (strain ATCC 700700 / DSM 12829 / CIP 107037 / JCM 12360 / KCTC 9906 / NCIMB 13794 / A6) (Arthrobacter chlorophenolicus), this protein is Urease subunit alpha.